The chain runs to 291 residues: Putative ribosomal protein uL16-like, mitochondrial (291 aa).

The transit peptide at Met-1 to Leu-27 directs the protein to the mitochondrion. A compositionally biased stretch (basic and acidic residues) spans Val-127–Gln-137. The tract at residues Val-127–Arg-173 is disordered. The segment covering Arg-163–Arg-173 has biased composition (basic residues).

Belongs to the universal ribosomal protein uL16 family.

It is found in the mitochondrion. Its function is as follows. Could be a component of the large subunit of mitochondrial ribosome. This is Putative ribosomal protein uL16-like, mitochondrial from Arabidopsis thaliana (Mouse-ear cress).